Reading from the N-terminus, the 311-residue chain is 3'(2'),5'-bisphosphate nucleotidase 1 (311 aa).

The active-site Proton acceptor is the Asp-49. Mg(2+)-binding residues include Glu-72, Asp-116, Leu-118, and Asp-119. The active-site Proton acceptor is the Thr-121. AMP is bound by residues Thr-202, His-205, Gly-227, and Lys-231. A Mg(2+)-binding site is contributed by Asp-254.

This sequence belongs to the inositol monophosphatase superfamily. Mg(2+) is required as a cofactor.

The catalysed reaction is adenosine 3',5'-bisphosphate + H2O = AMP + phosphate. It carries out the reaction adenosine 2',5'-bisphosphate + H2O = AMP + phosphate. The enzyme catalyses 3'-phosphoadenylyl sulfate + H2O = adenosine 5'-phosphosulfate + phosphate. It catalyses the reaction 1D-myo-inositol 1,4-bisphosphate + H2O = 1D-myo-inositol 4-phosphate + phosphate. The catalysed reaction is 1D-myo-inositol 1,3,4-trisphosphate + H2O = 1D-myo-inositol 3,4-bisphosphate + phosphate. With respect to regulation, inhibited by Li(+) and Ca(2+), but not by Na(+). Functionally, phosphatase that converts 3'(2')-phosphoadenosine 5'-phosphate (PAP) to AMP and adenosine 3'-phosphate 5'-phosphosulfate (PAPS) to adenosine 5'-phosphosulfate (APS). Is also able to hydrolyze inositol 1,4-bisphosphate (Ins(1,4)P2) and inositol 1,3,4-trisphosphate (Ins(1,3,4)P3), but is not active on AMP, 3'-AMP, fructose-1,6-bisphosphate, Ins(1)P, Ins(2)P and Ins(1,4,5)P3. Probably prevents the toxic accumulation of PAP, a compound which inhibits a variety of proteins, including PAPS-utilizing enzymes such as sulfotransferases, and RNA processing enzymes. Could also play a role in inositol recycling and phosphoinositide metabolism. The protein is 3'(2'),5'-bisphosphate nucleotidase 1 (bpnt1) of Dictyostelium discoideum (Social amoeba).